We begin with the raw amino-acid sequence, 638 residues long: Actin-regulating kinase 1 (638 aa).

The Protein kinase domain maps to 22–298 (VEIIKYLTSG…VYQLLKRISI (277 aa)). Residues 28 to 36 (LTSGGFAQV) and Lys-56 contribute to the ATP site. Asp-159 (proton acceptor) is an active-site residue. Position 478 is a phosphoserine (Ser-478). Residues 482-515 (YSTRGNIKKNQSVKESLTSSSLPGTSFTPTSTKV) show a composition bias toward polar residues. The segment at 482–518 (YSTRGNIKKNQSVKESLTSSSLPGTSFTPTSTKVNLK) is disordered. Ser-522 and Ser-535 each carry phosphoserine. The disordered stretch occupies residues 569–638 (SEESFNARKM…LAGRKLSLDK (70 aa)). The segment covering 582-593 (KLHEKGEIDKPT) has biased composition (basic and acidic residues). The tract at residues 602-615 (SKDKKTKPTPPPKP) is interaction with SH3 domain of ABP1.

The protein belongs to the protein kinase superfamily. Ser/Thr protein kinase family. As to quaternary structure, interacts with ABP1, which is required for proper actin patch localization.

The protein resides in the cytoplasm. It localises to the cytoskeleton. Its subcellular location is the actin patch. The catalysed reaction is L-seryl-[protein] + ATP = O-phospho-L-seryl-[protein] + ADP + H(+). The enzyme catalyses L-threonyl-[protein] + ATP = O-phospho-L-threonyl-[protein] + ADP + H(+). Functionally, involved in regulation of actin cytoskeleton organization and endocytosis. This chain is Actin-regulating kinase 1 (ARK1), found in Saccharomyces cerevisiae (strain ATCC 204508 / S288c) (Baker's yeast).